A 139-amino-acid chain; its full sequence is D-ribose pyranase (139 aa).

The active-site Proton donor is His-20. Substrate is bound by residues Asp-28, His-106, and 128-130; that span reads YAN.

The protein belongs to the RbsD / FucU family. RbsD subfamily. As to quaternary structure, homodecamer.

The protein localises to the cytoplasm. The catalysed reaction is beta-D-ribopyranose = beta-D-ribofuranose. The protein operates within carbohydrate metabolism; D-ribose degradation; D-ribose 5-phosphate from beta-D-ribopyranose: step 1/2. In terms of biological role, catalyzes the interconversion of beta-pyran and beta-furan forms of D-ribose. The polypeptide is D-ribose pyranase (Salmonella typhi).